A 680-amino-acid polypeptide reads, in one-letter code: DNA-directed RNA polymerase subunit beta' (680 aa).

The Zn(2+) site is built by Cys69, Cys71, Cys87, and Cys90. Residues Asp489, Asp491, and Asp493 each contribute to the Mg(2+) site.

Belongs to the RNA polymerase beta' chain family. RpoC1 subfamily. In terms of assembly, in plastids the minimal PEP RNA polymerase catalytic core is composed of four subunits: alpha, beta, beta', and beta''. When a (nuclear-encoded) sigma factor is associated with the core the holoenzyme is formed, which can initiate transcription. Requires Mg(2+) as cofactor. Zn(2+) is required as a cofactor.

It localises to the plastid. The protein resides in the chloroplast. It catalyses the reaction RNA(n) + a ribonucleoside 5'-triphosphate = RNA(n+1) + diphosphate. DNA-dependent RNA polymerase catalyzes the transcription of DNA into RNA using the four ribonucleoside triphosphates as substrates. The sequence is that of DNA-directed RNA polymerase subunit beta' from Ceratophyllum demersum (Rigid hornwort).